The sequence spans 152 residues: SsrA-binding protein (152 aa).

This sequence belongs to the SmpB family.

It is found in the cytoplasm. Required for rescue of stalled ribosomes mediated by trans-translation. Binds to transfer-messenger RNA (tmRNA), required for stable association of tmRNA with ribosomes. tmRNA and SmpB together mimic tRNA shape, replacing the anticodon stem-loop with SmpB. tmRNA is encoded by the ssrA gene; the 2 termini fold to resemble tRNA(Ala) and it encodes a 'tag peptide', a short internal open reading frame. During trans-translation Ala-aminoacylated tmRNA acts like a tRNA, entering the A-site of stalled ribosomes, displacing the stalled mRNA. The ribosome then switches to translate the ORF on the tmRNA; the nascent peptide is terminated with the 'tag peptide' encoded by the tmRNA and targeted for degradation. The ribosome is freed to recommence translation, which seems to be the essential function of trans-translation. This is SsrA-binding protein from Rickettsia prowazekii (strain Madrid E).